The sequence spans 148 residues: MAPGLRGLPRRGLWLLLAHHLFMVTACRDPDYGTLIQELCLSRFKEDMETIGKTLWCDWGKTIGSYGELTHCTKLVANKIGCFWPNPEVDKFFIAVHHRYFSKCPVSGRALRDPPNSILCPFIVLPITVTLLMTALVVWRSKRTEGIV.

A signal peptide spans 1-26 (MAPGLRGLPRRGLWLLLAHHLFMVTA). Intrachain disulfides connect cysteine 27/cysteine 82, cysteine 40/cysteine 72, and cysteine 57/cysteine 104. The Extracellular portion of the chain corresponds to 27–118 (CRDPDYGTLI…RALRDPPNSI (92 aa)). Residues 119–140 (LCPFIVLPITVTLLMTALVVWR) traverse the membrane as a helical segment. Residues 141-148 (SKRTEGIV) lie on the Cytoplasmic side of the membrane.

The protein belongs to the RAMP family. As to quaternary structure, heterodimer of CALCRL and RAMP1; the interaction induces allosteric modulation of CALCRL function and CGRP1/CALCA and CGRP2/CALCB ligand specificity. Heterodimer of CALCR and RAMP1; interaction forms the AMYR1 receptor complex for amylin/IAPP and CGRP1/CALCA ligands.

It localises to the cell membrane. Its function is as follows. Accessory protein that interacts with and modulates the function of G-protein coupled receptors including calcitonin gene-related peptide type 1 receptor (CALCRL) and calcitonin receptor (CALCR). Required for the transport of CALCRL to the plasma membrane. Together with CALCRL, form the receptor complex for the calcitonin gene-related peptides CGRP1/CALCA and CGRP2/CALCB. Together with CALCR, form the AMYR1 receptor complex for amylin/IAPP and CGRP1/CALCA. This chain is Receptor activity-modifying protein 1, found in Rattus norvegicus (Rat).